The chain runs to 309 residues: Zinc transporter ZIP2 (309 aa).

The Extracellular segment spans residues 1–8; it reads MEQLLGIK. The chain crosses the membrane as a helical span at residues 9–29; it reads LGCLFALLALTLGCGLTPICF. Topologically, residues 30–46 are cytoplasmic; that stretch reads KWFQIDAARGHHRLVLR. Residues 47 to 67 form a helical membrane-spanning segment; sequence LLGCISAGVFLGAGFMHMTAE. Residues 68–103 are Extracellular-facing; it reads ALEEIESQIQKFMVQNRSASERNSSGDADSAHMEYP. The chain crosses the membrane as a helical span at residues 104–124; it reads YGELIISLGFFFVFFLESLAL. Topologically, residues 125–164 are cytoplasmic; that stretch reads QCCPGAAGGSTVQDEEWGGAHIFELHSHGHLPSPSKGPLR. Residues 165-185 form a helical membrane-spanning segment; that stretch reads ALVLLLSLSFHSVFEGLAVGL. Positions 175 and 179 each coordinate Zn(2+). Over 186–189 the chain is Extracellular; that stretch reads QPTV. Residues 190-210 form a helical membrane-spanning segment; the sequence is AATVQLCLAVLAHKGLVVFGV. Histidine 202 lines the Zn(2+) pocket. Topologically, residues 211–224 are cytoplasmic; it reads GMRLVHLGTSSRWA. The chain crosses the membrane as a helical span at residues 225 to 245; sequence VFSILLLALMSPLGLAVGLAV. At 246–258 the chain is on the extracellular side; the sequence is TGGDSEGGRGLAQ. A helical transmembrane segment spans residues 259–279; the sequence is AVLEGVAAGTFLYVTFLEILP. A Zn(2+)-binding site is contributed by glutamate 276. Topologically, residues 280–288 are cytoplasmic; it reads RELASPEAP. A helical transmembrane segment spans residues 289–309; sequence LAKWSCVAAGFAFMAFIALWA.

It belongs to the ZIP transporter (TC 2.A.5) family. As to expression, expressed only in prostate and uterine epithelial cells.

The protein localises to the cell membrane. It carries out the reaction Zn(2+)(in) = Zn(2+)(out). The enzyme catalyses Cd(2+)(in) = Cd(2+)(out). With respect to regulation, activity is increased at acidic pH (6.5). Inhibited in the presence of high extracellular K(+). Its function is as follows. Transporter for the divalent cation Zn(2+). Mediates the influx of Zn(2+) into cells from extracellular space. The Zn(2+) uniporter activity is independent of H(+)-driving force, but is modulated by extracellular pH and membrane potential. Also transports other divalent cations Zn(2+), Cd2(+), Cu2(+), Co2(+) in the order of decreasing affinity, respectively. In the skin, aids in the differentiation of keratinocytes in the epidermis. This chain is Zinc transporter ZIP2, found in Homo sapiens (Human).